Reading from the N-terminus, the 242-residue chain is Probable transcriptional regulatory protein NGK_1508 (242 aa).

Belongs to the TACO1 family.

The protein localises to the cytoplasm. This Neisseria gonorrhoeae (strain NCCP11945) protein is Probable transcriptional regulatory protein NGK_1508.